A 336-amino-acid chain; its full sequence is Inositol 2-dehydrogenase (336 aa).

The protein belongs to the Gfo/Idh/MocA family. In terms of assembly, homotetramer.

The catalysed reaction is myo-inositol + NAD(+) = scyllo-inosose + NADH + H(+). In terms of biological role, involved in the oxidation of myo-inositol (MI) to 2-keto-myo-inositol (2KMI or 2-inosose). This chain is Inositol 2-dehydrogenase, found in Agrobacterium fabrum (strain C58 / ATCC 33970) (Agrobacterium tumefaciens (strain C58)).